The sequence spans 469 residues: Pentatricopeptide repeat-containing protein At2g34370, mitochondrial (469 aa).

Residues 1 to 65 (MVRLVCSRIL…QNRSFVQCRR (65 aa)) constitute a mitochondrion transit peptide. 4 PPR repeats span residues 142–172 (DARS…MPKR), 173–207 (NSET…GNKP), 208–238 (DKEI…MYRD), and 244–274 (SMED…MTVE). The tract at residues 375–469 (DIGFVPATRV…NGVCSCKDYW (95 aa)) is type DYW motif.

This sequence belongs to the PPR family. PCMP-H subfamily.

The protein resides in the mitochondrion. The protein is Pentatricopeptide repeat-containing protein At2g34370, mitochondrial (PCMP-H25) of Arabidopsis thaliana (Mouse-ear cress).